A 442-amino-acid polypeptide reads, in one-letter code: tRNA modification GTPase MnmE (442 aa).

(6S)-5-formyl-5,6,7,8-tetrahydrofolate-binding residues include R21, E79, and K118. The TrmE-type G domain maps to 214–367 (GFKIAIVGKP…LKEELQNYLN (154 aa)). N224 is a binding site for K(+). Residues 224-229 (NVGKSS), 243-249 (SDIAGTT), and 268-271 (DTAG) contribute to the GTP site. Position 228 (S228) interacts with Mg(2+). Residues S243, I245, and T248 each coordinate K(+). Residue T249 participates in Mg(2+) binding. Position 442 (K442) interacts with (6S)-5-formyl-5,6,7,8-tetrahydrofolate.

Belongs to the TRAFAC class TrmE-Era-EngA-EngB-Septin-like GTPase superfamily. TrmE GTPase family. Homodimer. Heterotetramer of two MnmE and two MnmG subunits. K(+) is required as a cofactor.

Its subcellular location is the cytoplasm. Its function is as follows. Exhibits a very high intrinsic GTPase hydrolysis rate. Involved in the addition of a carboxymethylaminomethyl (cmnm) group at the wobble position (U34) of certain tRNAs, forming tRNA-cmnm(5)s(2)U34. The sequence is that of tRNA modification GTPase MnmE from Campylobacter jejuni subsp. jejuni serotype O:23/36 (strain 81-176).